Here is an 833-residue protein sequence, read N- to C-terminus: Protein translocase subunit SecA (833 aa).

ATP is bound by residues Q87, 105 to 109 (GEGKT), and D494. The disordered stretch occupies residues 789–816 (PAAVAYSGGEAEAGPAQPHREDPKVGRN). Residues 806-815 (PHREDPKVGR) show a composition bias toward basic and acidic residues. Residues C819, C821, C830, and C831 each contribute to the Zn(2+) site.

It belongs to the SecA family. Monomer and homodimer. Part of the essential Sec protein translocation apparatus which comprises SecA, SecYEG and auxiliary proteins SecDF-YajC and YidC. Requires Zn(2+) as cofactor.

It localises to the cell inner membrane. Its subcellular location is the cytoplasm. It catalyses the reaction ATP + H2O + cellular proteinSide 1 = ADP + phosphate + cellular proteinSide 2.. Part of the Sec protein translocase complex. Interacts with the SecYEG preprotein conducting channel. Has a central role in coupling the hydrolysis of ATP to the transfer of proteins into and across the cell membrane, serving as an ATP-driven molecular motor driving the stepwise translocation of polypeptide chains across the membrane. This is Protein translocase subunit SecA from Nitratidesulfovibrio vulgaris (strain DP4) (Desulfovibrio vulgaris).